The primary structure comprises 396 residues: NADH-quinone oxidoreductase subunit D 1 (396 aa).

The protein belongs to the complex I 49 kDa subunit family. In terms of assembly, NDH-1 is composed of 14 different subunits. Subunits NuoB, C, D, E, F, and G constitute the peripheral sector of the complex.

It localises to the cell inner membrane. It carries out the reaction a quinone + NADH + 5 H(+)(in) = a quinol + NAD(+) + 4 H(+)(out). In terms of biological role, NDH-1 shuttles electrons from NADH, via FMN and iron-sulfur (Fe-S) centers, to quinones in the respiratory chain. The immediate electron acceptor for the enzyme in this species is believed to be ubiquinone. Couples the redox reaction to proton translocation (for every two electrons transferred, four hydrogen ions are translocated across the cytoplasmic membrane), and thus conserves the redox energy in a proton gradient. The sequence is that of NADH-quinone oxidoreductase subunit D 1 from Sinorhizobium medicae (strain WSM419) (Ensifer medicae).